Consider the following 266-residue polypeptide: MKQAIGFIDSGVGGLTVVREVLKQLPHEQVYYLGDTARCPYGPRDKEEVAKFTWEMTNFLVDRGIKMLVIACNTATAAALYDIREKLDIPVIGVIQPGSRAALKATRNNKIGVLGTLGTVESMAYPTALKGLNRRVEVDSLACPKFVSVVESGEYKSAIAKKVVAESLLPLKSTKIDTVILGCTHYPLLKPIIENFMGDGVAVINSGEETASEVSALLDYHNLLDSTDEEIEHRFFTTGSTQIFKDIAKDWLNMPDMTVEHIKLGK.

Substrate is bound by residues 9–10 (DS) and 41–42 (YG). Catalysis depends on C72, which acts as the Proton donor/acceptor. Position 73–74 (73–74 (NT)) interacts with substrate. C183 acts as the Proton donor/acceptor in catalysis. 184–185 (TH) is a binding site for substrate.

It belongs to the aspartate/glutamate racemases family.

It carries out the reaction L-glutamate = D-glutamate. The protein operates within cell wall biogenesis; peptidoglycan biosynthesis. In terms of biological role, provides the (R)-glutamate required for cell wall biosynthesis. In Listeria monocytogenes serotype 4a (strain HCC23), this protein is Glutamate racemase.